Here is a 217-residue protein sequence, read N- to C-terminus: Outer-membrane lipoprotein LolB (217 aa).

The first 20 residues, 1-20 (MSRAVRTLALGGLVLVGLSA), serve as a signal peptide directing secretion. Cys-21 carries N-palmitoyl cysteine lipidation. Residue Cys-21 is the site of S-diacylglycerol cysteine attachment.

The protein belongs to the LolB family. In terms of assembly, monomer.

The protein resides in the cell outer membrane. Plays a critical role in the incorporation of lipoproteins in the outer membrane after they are released by the LolA protein. The sequence is that of Outer-membrane lipoprotein LolB from Xanthomonas euvesicatoria pv. vesicatoria (strain 85-10) (Xanthomonas campestris pv. vesicatoria).